Reading from the N-terminus, the 172-residue chain is Peptide methionine sulfoxide reductase MsrA 2 (172 aa).

Cys-12 is an active-site residue.

It belongs to the MsrA Met sulfoxide reductase family.

It catalyses the reaction L-methionyl-[protein] + [thioredoxin]-disulfide + H2O = L-methionyl-(S)-S-oxide-[protein] + [thioredoxin]-dithiol. The enzyme catalyses [thioredoxin]-disulfide + L-methionine + H2O = L-methionine (S)-S-oxide + [thioredoxin]-dithiol. In terms of biological role, has an important function as a repair enzyme for proteins that have been inactivated by oxidation. Catalyzes the reversible oxidation-reduction of methionine sulfoxide in proteins to methionine. This chain is Peptide methionine sulfoxide reductase MsrA 2 (msrA2), found in Lactococcus lactis subsp. lactis (strain IL1403) (Streptococcus lactis).